A 210-amino-acid chain; its full sequence is Urease accessory protein UreF (210 aa).

The protein belongs to the UreF family. UreD, UreF and UreG form a complex that acts as a GTP-hydrolysis-dependent molecular chaperone, activating the urease apoprotein by helping to assemble the nickel containing metallocenter of UreC. The UreE protein probably delivers the nickel.

The protein localises to the cytoplasm. Required for maturation of urease via the functional incorporation of the urease nickel metallocenter. The polypeptide is Urease accessory protein UreF (Cereibacter sphaeroides (strain KD131 / KCTC 12085) (Rhodobacter sphaeroides)).